The primary structure comprises 247 residues: 4-nitrobenzoate reductase (247 aa).

Position 29-33 (R29–R33) interacts with FMN. Residues S59, R112, Y120, and L126 each contribute to the NADP(+) site. R232 serves as a coordination point for FMN.

Belongs to the nitroreductase family. FMN serves as cofactor.

The enzyme catalyses 4-nitrobenzoate + 2 NADPH + 2 H(+) = 4-hydroxylaminobenzoate + 2 NADP(+) + H2O. Nitroreductase involved in the degradation of nitroaromatic compounds. Catalyzes the conversion of 4-nitrobenzoate to 4-hydroxylaminobenzoate. The polypeptide is 4-nitrobenzoate reductase (Nocardioides sp. (strain LMS-CY)).